Here is a 356-residue protein sequence, read N- to C-terminus: Heparan sulfate 2-O-sulfotransferase 1 (356 aa).

The Cytoplasmic segment spans residues methionine 1–lysine 11. Residues leucine 12–glutamate 28 traverse the membrane as a helical; Signal-anchor for type II membrane protein segment. Residues methionine 24–arginine 51 adopt a coiled-coil conformation. The Lumenal segment spans residues asparagine 29 to asparagine 356. Adenosine 3',5'-bisphosphate-binding residues include lysine 83, threonine 84, alanine 85, serine 86, threonine 87, and serine 88. Asparagine 108 and asparagine 127 each carry an N-linked (GlcNAc...) asparagine glycan. Residues histidine 140 and histidine 142 contribute to the active site. Adenosine 3',5'-bisphosphate is bound by residues arginine 164 and serine 172. Intrachain disulfides connect cysteine 201–cysteine 209 and cysteine 222–cysteine 228. Positions 279, 285, 290, and 293 each coordinate adenosine 3',5'-bisphosphate.

The protein belongs to the sulfotransferase 3 family. In terms of assembly, homotrimer. Interacts with the C5-epimerase GLCE. Post-translationally, N-glycosylated. As to expression, widely expressed. Expressed at higher level in lung and brain. Weakly expressed in spleen.

Its subcellular location is the golgi apparatus membrane. Functionally, catalyzes the transfer of a sulfo group from 3'-phospho-5'-adenylyl sulfate (PAPS) to the 2-OH position of iduronic acid (IdoA) or glucuronic acid (GlcA) within the heparan sulfate (HS) chain and participates in HS biosynthesis. Required for metanephric development of kidney formation, suggesting that 2-O-sulfation within HS is essential for signaling between ureteric bud and metanephric mesenchyme. This Mus musculus (Mouse) protein is Heparan sulfate 2-O-sulfotransferase 1.